A 396-amino-acid polypeptide reads, in one-letter code: 8-amino-7-oxononanoate synthase (396 aa).

Arg-19 lines the substrate pocket. Pyridoxal 5'-phosphate is bound at residue 106–107; sequence GY. Position 131 (His-131) interacts with substrate. 3 residues coordinate pyridoxal 5'-phosphate: Ser-176, His-204, and Thr-233. Lys-236 bears the N6-(pyridoxal phosphate)lysine mark. Thr-350 contacts substrate.

The protein belongs to the class-II pyridoxal-phosphate-dependent aminotransferase family. BioF subfamily. Homodimer. Pyridoxal 5'-phosphate serves as cofactor.

The enzyme catalyses 6-carboxyhexanoyl-[ACP] + L-alanine + H(+) = (8S)-8-amino-7-oxononanoate + holo-[ACP] + CO2. The protein operates within cofactor biosynthesis; biotin biosynthesis. Its function is as follows. Catalyzes the decarboxylative condensation of pimeloyl-[acyl-carrier protein] and L-alanine to produce 8-amino-7-oxononanoate (AON), [acyl-carrier protein], and carbon dioxide. The sequence is that of 8-amino-7-oxononanoate synthase from Pseudomonas syringae pv. syringae (strain B728a).